The primary structure comprises 281 residues: 2,3,4,5-tetrahydropyridine-2,6-dicarboxylate N-succinyltransferase (281 aa).

The substrate site is built by Arg108 and Asp145.

Belongs to the transferase hexapeptide repeat family. Homotrimer.

It localises to the cytoplasm. It carries out the reaction (S)-2,3,4,5-tetrahydrodipicolinate + succinyl-CoA + H2O = (S)-2-succinylamino-6-oxoheptanedioate + CoA. It participates in amino-acid biosynthesis; L-lysine biosynthesis via DAP pathway; LL-2,6-diaminopimelate from (S)-tetrahydrodipicolinate (succinylase route): step 1/3. In Rhodopseudomonas palustris (strain BisB5), this protein is 2,3,4,5-tetrahydropyridine-2,6-dicarboxylate N-succinyltransferase.